A 290-amino-acid polypeptide reads, in one-letter code: 4-hydroxy-tetrahydrodipicolinate synthase (290 aa).

Residue T46 participates in pyruvate binding. Residue Y134 is the Proton donor/acceptor of the active site. Catalysis depends on K163, which acts as the Schiff-base intermediate with substrate. V205 is a binding site for pyruvate.

Belongs to the DapA family. As to quaternary structure, homotetramer; dimer of dimers.

It is found in the cytoplasm. The enzyme catalyses L-aspartate 4-semialdehyde + pyruvate = (2S,4S)-4-hydroxy-2,3,4,5-tetrahydrodipicolinate + H2O + H(+). Its pathway is amino-acid biosynthesis; L-lysine biosynthesis via DAP pathway; (S)-tetrahydrodipicolinate from L-aspartate: step 3/4. Functionally, catalyzes the condensation of (S)-aspartate-beta-semialdehyde [(S)-ASA] and pyruvate to 4-hydroxy-tetrahydrodipicolinate (HTPA). In Bacillus subtilis (strain 168), this protein is 4-hydroxy-tetrahydrodipicolinate synthase.